The sequence spans 94 residues: Ribonuclease P protein component 1 (94 aa).

Belongs to the eukaryotic/archaeal RNase P protein component 1 family. As to quaternary structure, consists of a catalytic RNA component and at least 4-5 protein subunits.

It is found in the cytoplasm. It catalyses the reaction Endonucleolytic cleavage of RNA, removing 5'-extranucleotides from tRNA precursor.. Its function is as follows. Part of ribonuclease P, a protein complex that generates mature tRNA molecules by cleaving their 5'-ends. The chain is Ribonuclease P protein component 1 from Haloarcula marismortui (strain ATCC 43049 / DSM 3752 / JCM 8966 / VKM B-1809) (Halobacterium marismortui).